The following is a 264-amino-acid chain: Thymidylate synthase (264 aa).

R21 contacts dUMP. H51 lines the (6R)-5,10-methylene-5,6,7,8-tetrahydrofolate pocket. Position 126–127 (126–127 (RR)) interacts with dUMP. C146 acts as the Nucleophile in catalysis. Residues 166–169 (RSAD), N177, and 207–209 (HIY) contribute to the dUMP site. D169 is a (6R)-5,10-methylene-5,6,7,8-tetrahydrofolate binding site. S263 is a (6R)-5,10-methylene-5,6,7,8-tetrahydrofolate binding site.

This sequence belongs to the thymidylate synthase family. Bacterial-type ThyA subfamily. Homodimer.

The protein localises to the cytoplasm. The enzyme catalyses dUMP + (6R)-5,10-methylene-5,6,7,8-tetrahydrofolate = 7,8-dihydrofolate + dTMP. Its pathway is pyrimidine metabolism; dTTP biosynthesis. Functionally, catalyzes the reductive methylation of 2'-deoxyuridine-5'-monophosphate (dUMP) to 2'-deoxythymidine-5'-monophosphate (dTMP) while utilizing 5,10-methylenetetrahydrofolate (mTHF) as the methyl donor and reductant in the reaction, yielding dihydrofolate (DHF) as a by-product. This enzymatic reaction provides an intracellular de novo source of dTMP, an essential precursor for DNA biosynthesis. In Exiguobacterium sp. (strain ATCC BAA-1283 / AT1b), this protein is Thymidylate synthase.